A 164-amino-acid polypeptide reads, in one-letter code: uncharacterized protein (164 aa).

This is an uncharacterized protein from Rickettsia bellii (strain RML369-C).